Consider the following 482-residue polypeptide: Caspase-8 (482 aa).

Positions 1–218 (MDFHSCLYDI…DMWDSPGEQE (218 aa)) are excised as a propeptide. 2 consecutive DED domains span residues 2 to 80 (DFHS…RVLK) and 100 to 177 (AYRV…RIDD). Residues S188 and S213 each carry the phosphoserine modification. The active site involves H319. Y336 carries the post-translational modification Phosphotyrosine. Residue C362 is part of the active site. A propeptide spanning residues 379–388 (LEQEHVLEED) is cleaved from the precursor. S390 is subject to Phosphoserine; by CDK1.

The protein belongs to the peptidase C14A family. Heterotetramer that consists of two anti-parallel arranged heterodimers, each one formed by a 18 kDa (p18) and a 10 kDa (p10) subunit. Component of the death-induced signaling complex (DISC) composed of cell surface receptor FAS/CD95 or TNFRSF1A, adapter protein FADD and the CASP8 protease; recruitment of CASP8 to the complex is required for processing of CASP8 into the p18 and p10 subunits. Component of the AIM2 PANoptosome complex, a multiprotein complex that drives inflammatory cell death (PANoptosis). Interacts with CFLAR and PEA15. Interacts with RFFL and RNF34; negatively regulate CASP8 through proteasomal degradation. Interacts with TNFAIP8L2. Interacts with CASP8AP2. Interacts with NOL3; decreases CASP8 activity in a mitochondria localization- and phosphorylation-dependent manner and this interaction is dissociated by calcium. Interacts with UBR2. Interacts with RIPK1. Interacts with stimulated TNFRSF10B; this interaction is followed by CASP8 proteolytic cleavage and activation. In terms of processing, generation of the subunits requires association with the death-inducing signaling complex (DISC), whereas additional processing is likely due to the autocatalytic activity of the activated protease. GZMB and CASP10 can be involved in these processing events. Post-translationally, phosphorylation on Ser-389 during mitosis by CDK1 inhibits activation by proteolysis and prevents apoptosis. This phosphorylation occurs in cancer cell lines, as well as in primary breast tissues and lymphocytes.

Its subcellular location is the cytoplasm. The protein localises to the nucleus. It catalyses the reaction Strict requirement for Asp at position P1 and has a preferred cleavage sequence of (Leu/Asp/Val)-Glu-Thr-Asp-|-(Gly/Ser/Ala).. Its activity is regulated as follows. CASP8 activity is restricted by RIPK1. In terms of biological role, thiol protease that plays a key role in programmed cell death by acting as a molecular switch for apoptosis, necroptosis and pyroptosis, and is required to prevent tissue damage during embryonic development and adulthood. Initiator protease that induces extrinsic apoptosis by mediating cleavage and activation of effector caspases responsible for FAS/CD95-mediated and TNFRSF1A-induced cell death. Cleaves and activates effector caspases CASP3, CASP4, CASP6, CASP7, CASP9 and CASP10. Binding to the adapter molecule FADD recruits it to either receptor FAS/CD95 or TNFRSF1A. The resulting aggregate called the death-inducing signaling complex (DISC) performs CASP8 proteolytic activation. The active dimeric enzyme is then liberated from the DISC and free to activate downstream apoptotic proteases. Proteolytic fragments of the N-terminal propeptide (termed CAP3, CAP5 and CAP6) are likely retained in the DISC. In addition to extrinsic apoptosis, also acts as a negative regulator of necroptosis: acts by cleaving RIPK1 at 'Asp-325', which is crucial to inhibit RIPK1 kinase activity, limiting TNF-induced apoptosis, necroptosis and inflammatory response. Also able to initiate pyroptosis by mediating cleavage and activation of gasdermin-C and -D (GSDMC and GSDMD, respectively): gasdermin cleavage promotes release of the N-terminal moiety that binds to membranes and forms pores, triggering pyroptosis. Initiates pyroptosis following inactivation of MAP3K7/TAK1. Also acts as a regulator of innate immunity by mediating cleavage and inactivation of N4BP1 downstream of TLR3 or TLR4, thereby promoting cytokine production. May participate in the Granzyme B (GZMB) cell death pathways. Cleaves PARP1 and PARP2. The sequence is that of Caspase-8 from Rattus norvegicus (Rat).